A 209-amino-acid chain; its full sequence is Thiamine-phosphate synthase (209 aa).

Residues 36 to 40 and N68 each bind 4-amino-2-methyl-5-(diphosphooxymethyl)pyrimidine; that span reads QYRDK. D69 and D87 together coordinate Mg(2+). T106 is a 4-amino-2-methyl-5-(diphosphooxymethyl)pyrimidine binding site. 133–135 contacts 2-[(2R,5Z)-2-carboxy-4-methylthiazol-5(2H)-ylidene]ethyl phosphate; that stretch reads SST. K136 contacts 4-amino-2-methyl-5-(diphosphooxymethyl)pyrimidine. G163 provides a ligand contact to 2-[(2R,5Z)-2-carboxy-4-methylthiazol-5(2H)-ylidene]ethyl phosphate.

It belongs to the thiamine-phosphate synthase family. Mg(2+) serves as cofactor.

It carries out the reaction 2-[(2R,5Z)-2-carboxy-4-methylthiazol-5(2H)-ylidene]ethyl phosphate + 4-amino-2-methyl-5-(diphosphooxymethyl)pyrimidine + 2 H(+) = thiamine phosphate + CO2 + diphosphate. The catalysed reaction is 2-(2-carboxy-4-methylthiazol-5-yl)ethyl phosphate + 4-amino-2-methyl-5-(diphosphooxymethyl)pyrimidine + 2 H(+) = thiamine phosphate + CO2 + diphosphate. It catalyses the reaction 4-methyl-5-(2-phosphooxyethyl)-thiazole + 4-amino-2-methyl-5-(diphosphooxymethyl)pyrimidine + H(+) = thiamine phosphate + diphosphate. It participates in cofactor biosynthesis; thiamine diphosphate biosynthesis; thiamine phosphate from 4-amino-2-methyl-5-diphosphomethylpyrimidine and 4-methyl-5-(2-phosphoethyl)-thiazole: step 1/1. In terms of biological role, condenses 4-methyl-5-(beta-hydroxyethyl)thiazole monophosphate (THZ-P) and 2-methyl-4-amino-5-hydroxymethyl pyrimidine pyrophosphate (HMP-PP) to form thiamine monophosphate (TMP). This chain is Thiamine-phosphate synthase, found in Pseudomonas aeruginosa (strain LESB58).